Here is a 624-residue protein sequence, read N- to C-terminus: 1-deoxy-D-xylulose-5-phosphate synthase (624 aa).

Thiamine diphosphate is bound by residues His80 and Gly121–Ser123. A Mg(2+)-binding site is contributed by Asp152. Thiamine diphosphate-binding positions include Gly153–Ala154, Asn181, Tyr288, and Glu370. Residue Asn181 coordinates Mg(2+).

The protein belongs to the transketolase family. DXPS subfamily. Homodimer. Mg(2+) is required as a cofactor. It depends on thiamine diphosphate as a cofactor.

The enzyme catalyses D-glyceraldehyde 3-phosphate + pyruvate + H(+) = 1-deoxy-D-xylulose 5-phosphate + CO2. Its pathway is metabolic intermediate biosynthesis; 1-deoxy-D-xylulose 5-phosphate biosynthesis; 1-deoxy-D-xylulose 5-phosphate from D-glyceraldehyde 3-phosphate and pyruvate: step 1/1. Its function is as follows. Catalyzes the acyloin condensation reaction between C atoms 2 and 3 of pyruvate and glyceraldehyde 3-phosphate to yield 1-deoxy-D-xylulose-5-phosphate (DXP). The polypeptide is 1-deoxy-D-xylulose-5-phosphate synthase (Proteus mirabilis (strain HI4320)).